A 622-amino-acid chain; its full sequence is Dynein axonemal assembly factor 1 (622 aa).

The disordered stretch occupies residues 1-80 (MHPEVSEPQA…ARNDRDDRGP (80 aa)). A compositionally biased stretch (basic and acidic residues) spans 22–42 (AGDHGRAGPGVRKEEINETKE). A compositionally biased stretch (low complexity) spans 48-59 (STTSCQSQKQQS). Residues 62–80 (SRLDCRSGYARNDRDDRGP) are compositionally biased toward basic and acidic residues. LRR repeat units lie at residues 101-123 (ALND…EEYT), 124-145 (GLRC…QAQS), 146-167 (ELRC…EPLQ), 168-189 (KLDA…SCLP), 190-211 (VLNT…QHLR), and 215-236 (RLCV…SVLE). One can recognise an LRRCT domain in the interval 249–288 (NPVTKHIPNYRRTVTVRLKQLTYLDDRPVFPKDRACAEAW). The span at 326-336 (EERKKARDKGE) shows a compositional bias: basic and acidic residues. The interval 326–360 (EERKKARDKGETPLPDSEESSSTSPEAQDKPPLGE) is disordered. The segment covering 337–351 (TPLPDSEESSSTSPE) has biased composition (low complexity). Phosphoserine is present on residues S349, S464, and S487. Disordered stretches follow at residues 481-503 (SSLS…EHTP) and 540-622 (LETQ…FGLD). Positions 540 to 550 (LETQGQVFSTT) are enriched in polar residues.

This sequence belongs to the DNAAF1 family.

The protein resides in the cell projection. The protein localises to the cilium. In terms of biological role, cilium-specific protein required for the stability of the ciliary architecture. Plays a role in cytoplasmic preassembly of dynein arms. Involved in regulation of microtubule-based cilia and actin-based brush border microvilli. The protein is Dynein axonemal assembly factor 1 (Dnaaf1) of Peromyscus leucopus (White-footed mouse).